The chain runs to 339 residues: Glycerol-3-phosphate dehydrogenase [NAD(P)+] (339 aa).

Ser-13, Trp-14, and Lys-108 together coordinate NADPH. Sn-glycerol 3-phosphate contacts are provided by Lys-108, Gly-139, and Ser-141. Ala-143 lines the NADPH pocket. Residues Lys-194, Asp-247, Ser-257, Arg-258, and Asn-259 each coordinate sn-glycerol 3-phosphate. Lys-194 functions as the Proton acceptor in the catalytic mechanism. Arg-258 lines the NADPH pocket. NADPH contacts are provided by Val-282 and Glu-284.

It belongs to the NAD-dependent glycerol-3-phosphate dehydrogenase family.

The protein localises to the cytoplasm. It carries out the reaction sn-glycerol 3-phosphate + NAD(+) = dihydroxyacetone phosphate + NADH + H(+). The catalysed reaction is sn-glycerol 3-phosphate + NADP(+) = dihydroxyacetone phosphate + NADPH + H(+). Its pathway is membrane lipid metabolism; glycerophospholipid metabolism. Functionally, catalyzes the reduction of the glycolytic intermediate dihydroxyacetone phosphate (DHAP) to sn-glycerol 3-phosphate (G3P), the key precursor for phospholipid synthesis. This is Glycerol-3-phosphate dehydrogenase [NAD(P)+] from Streptococcus equi subsp. equi (strain 4047).